The sequence spans 237 residues: Ribosomal RNA small subunit methyltransferase G (237 aa).

S-adenosyl-L-methionine is bound by residues Gly78, Phe83, 129-130 (AE), and Arg148. The disordered stretch occupies residues 218-237 (KKETPNKYPRKAGMPNKRPL).

Belongs to the methyltransferase superfamily. RNA methyltransferase RsmG family.

The protein resides in the cytoplasm. In terms of biological role, specifically methylates the N7 position of a guanine in 16S rRNA. This is Ribosomal RNA small subunit methyltransferase G from Streptococcus pneumoniae (strain ATCC BAA-255 / R6).